A 414-amino-acid chain; its full sequence is Serine hydroxymethyltransferase (414 aa).

(6S)-5,6,7,8-tetrahydrofolate is bound by residues Leu-121 and 125–127 (GHL). Lys-229 bears the N6-(pyridoxal phosphate)lysine mark.

The protein belongs to the SHMT family. In terms of assembly, homodimer. The cofactor is pyridoxal 5'-phosphate.

The protein resides in the cytoplasm. It catalyses the reaction (6R)-5,10-methylene-5,6,7,8-tetrahydrofolate + glycine + H2O = (6S)-5,6,7,8-tetrahydrofolate + L-serine. It functions in the pathway one-carbon metabolism; tetrahydrofolate interconversion. It participates in amino-acid biosynthesis; glycine biosynthesis; glycine from L-serine: step 1/1. Catalyzes the reversible interconversion of serine and glycine with tetrahydrofolate (THF) serving as the one-carbon carrier. This reaction serves as the major source of one-carbon groups required for the biosynthesis of purines, thymidylate, methionine, and other important biomolecules. Also exhibits THF-independent aldolase activity toward beta-hydroxyamino acids, producing glycine and aldehydes, via a retro-aldol mechanism. This chain is Serine hydroxymethyltransferase, found in Janthinobacterium sp. (strain Marseille) (Minibacterium massiliensis).